The chain runs to 357 residues: 3-isopropylmalate dehydrogenase (357 aa).

Substrate is bound by residues arginine 97, arginine 107, arginine 135, and aspartate 224. Positions 224, 248, and 252 each coordinate Mg(2+). 282-294 (GSAPDIAGQDKAN) is a binding site for NAD(+).

This sequence belongs to the isocitrate and isopropylmalate dehydrogenases family. LeuB type 1 subfamily. Homodimer. Requires Mg(2+) as cofactor. Mn(2+) is required as a cofactor.

The protein resides in the cytoplasm. The enzyme catalyses (2R,3S)-3-isopropylmalate + NAD(+) = 4-methyl-2-oxopentanoate + CO2 + NADH. It functions in the pathway amino-acid biosynthesis; L-leucine biosynthesis; L-leucine from 3-methyl-2-oxobutanoate: step 3/4. Its function is as follows. Catalyzes the oxidation of 3-carboxy-2-hydroxy-4-methylpentanoate (3-isopropylmalate) to 3-carboxy-4-methyl-2-oxopentanoate. The product decarboxylates to 4-methyl-2 oxopentanoate. The sequence is that of 3-isopropylmalate dehydrogenase from Synechococcus sp. (strain CC9605).